The sequence spans 179 residues: Large ribosomal subunit protein uL5 (179 aa).

It belongs to the universal ribosomal protein uL5 family. In terms of assembly, part of the 50S ribosomal subunit; part of the 5S rRNA/L5/L18/L25 subcomplex. Contacts the 5S rRNA and the P site tRNA. Forms a bridge to the 30S subunit in the 70S ribosome.

Functionally, this is one of the proteins that bind and probably mediate the attachment of the 5S RNA into the large ribosomal subunit, where it forms part of the central protuberance. In the 70S ribosome it contacts protein S13 of the 30S subunit (bridge B1b), connecting the 2 subunits; this bridge is implicated in subunit movement. Contacts the P site tRNA; the 5S rRNA and some of its associated proteins might help stabilize positioning of ribosome-bound tRNAs. This Azotobacter vinelandii (strain DJ / ATCC BAA-1303) protein is Large ribosomal subunit protein uL5.